The following is a 680-amino-acid chain: Probable ATP-dependent RNA helicase pitchoune (680 aa).

Positions 1–168 (MSIREKLLMK…GKPAKDDEPF (168 aa)) are disordered. A compositionally biased stretch (polar residues) spans 29-42 (KNAQKQEPPKQNGN). Residues 59–69 (DEDDDLEEDFQ) are compositionally biased toward acidic residues. The span at 74–83 (PKKKQQKQPP) shows a compositional bias: basic residues. Over residues 95–141 (SESDDDEQEDEADEDSDLDEVAEVDEEDVDSGSEDDDQQEDEDEEEP) the composition is skewed to acidic residues. Positions 187 to 215 (FASLKGAVSEATLRAIKEMGFTEMTEIQS) match the Q motif motif. One can recognise a Helicase ATP-binding domain in the interval 218–393 (LTPLLKGRDL…KLALKSEPIY (176 aa)). ATP is bound at residue 231-238 (AQTGSGKT). The DEVD box signature appears at 341-344 (DEVD). Residues 407–577 (GLEQGYIVCP…DIQLQLEKLI (171 aa)) enclose the Helicase C-terminal domain. Residues 659-680 (GSASKQRHFKQVNRDQAKKFMR) are disordered. Over residues 670–680 (VNRDQAKKFMR) the composition is skewed to basic and acidic residues.

This sequence belongs to the DEAD box helicase family. DDX18/HAS1 subfamily.

It is found in the nucleus. It localises to the nucleolus. The catalysed reaction is ATP + H2O = ADP + phosphate + H(+). Probable RNA-dependent helicase. Functions in cell growth and proliferation. May have a role in ribosome biogenesis and, consequently, in protein biosynthesis. This is Probable ATP-dependent RNA helicase pitchoune (pit) from Drosophila melanogaster (Fruit fly).